We begin with the raw amino-acid sequence, 251 residues long: Histocompatibility antigen 60b (251 aa).

The N-terminal stretch at 1–24 (MAKSSLSLNWSLLVLLNFLGATLS) is a signal peptide. Residues 25 to 212 (TGTDSLSCEL…NSDTQGLSFT (188 aa)) lie on the Extracellular side of the membrane. 4 N-linked (GlcNAc...) asparagine glycosylation sites follow: Asn63, Asn93, Asn126, and Asn189. The helical transmembrane segment at 213–233 (WIVIICIGGIVSFMAFMVFAW) threads the bilayer. Over 234–251 (CMLKKKKGALCCSSSSTT) the chain is Cytoplasmic.

Belongs to the NKG2D ligand family. In strain C57BL/6J, strongly expressed in cardiac muscle and skeletal muscle, with lower expression levels in spleen, liver, kidney and thymus. In strain BALB/cJ, weakly expressed in cardiac muscle, spleen, kidney and thymus.

Its subcellular location is the cell membrane. Its function is as follows. Ligand for the KLRK1 immunosurveillance receptor. Binding to KLRK1 stimulates cell lysis in vitro. This is Histocompatibility antigen 60b from Mus musculus (Mouse).